Consider the following 173-residue polypeptide: Translation initiation factor IF-3 (173 aa).

It belongs to the IF-3 family. In terms of assembly, monomer.

The protein localises to the cytoplasm. In terms of biological role, IF-3 binds to the 30S ribosomal subunit and shifts the equilibrium between 70S ribosomes and their 50S and 30S subunits in favor of the free subunits, thus enhancing the availability of 30S subunits on which protein synthesis initiation begins. The sequence is that of Translation initiation factor IF-3 from Methylobacterium radiotolerans (strain ATCC 27329 / DSM 1819 / JCM 2831 / NBRC 15690 / NCIMB 10815 / 0-1).